We begin with the raw amino-acid sequence, 1143 residues long: MEAAAMAVTAATGALAPVLVKLAALLDDGECNLLEGSRSDAEFIRSELEAVHSLLTPNILGRMGDDDAACKDGLIAEVRELSYDLDDAVDDFLELNFEQRRSASPFGELKARVEERVSNRFSDWKLPAASLPPSSVHRRAGLPPPDAGLVGMHKRKEELIELLEQGSSDASRWRKRKPHVPLRIMGGEMQKIVFKIPMVDDKSRTKAMSLVASTVGVHSVAIAGDLRDEVVVVGDGIDSINLVSALRKKVGPAMFLEVSQAKEDVKEITAMLAPVKSICEFHEVKTICILGLPGGGKTTIARVLYHALGTQFQCRVFASISPSSSPSPNLTETLADIFAQAQLGVTDTLSTPYGGSGTGRALQQHLIDNISAFLLNKKYLIVIDDIWHWEEWEVIRKSIPKNDLGGRIIMTTRLNSIAEKCHTDDNDVFVYEVGDLDNNDAWSLSWGIATKSGAGNRIGTGEDNSCYDIVNMCYGMPLALIWLSSALVGEIEELGGAEVKKCRDLRHIEDGILDIPSLQPLAESLCLGYNHLPLYLRTLLLYCSAYHWSNRIERGRLVRRWIAEGFVSEEKEAEGYFGELINRGWITQHGDNNSYNYYEIHPVMLAFLRCKSKEYNFLTCLGLGSDTSTSASSPRLIRRLSLQGGYPVDCLSSMSMDVSHTCSLVVLGDVARPKGIPFYMFKRLRVLDLEDNKDIQDSHLQGICEQLSLRVRYLGLKGTRIRKLPQEMRKLKHLEILYVGSTRISELPQEIGELKHLRILDVRNTDITELPLQIRELQHLHTLDVRNTPISELPPQVGKLQNLKIMCVRSTGVRELPKEIGELNHLQTLDVRNTRVRELPWQAGQISQSLRVLAGDSGDGVRLPEGVCEALINGIPGATRAKCREVLSIAIIDRFGPPLVGIFKVPGSHMRIPKMIKDHFRVLSCLDIRLCHKLEDDDQKFLAEMPNLQTLVLRFEALPRQPITINGTGFQMLESFRVDSRVPRIAFHEDAMPNLKLLEFKFYAGPASNDAIGITNLKSLQKVVFRCSPWYKSDAPGISATIDVVKKEAEEHPNRPITLLINAGYKEISTESHGSSENIAGSSGIDTEPAQAQHDNLPAVRDDYKGKGILLDGRCPTCGRATKIEEETQDRVADIEIQTETTS.

The tract at residues 1 to 190 (MEAAAMAVTA…PLRIMGGEMQ (190 aa)) is structured coiled coil (CC) domain. The HMA domain maps to 189–258 (MQKIVFKIPM…KVGPAMFLEV (70 aa)). Positions 191 to 264 (KIVFKIPMVD…FLEVSQAKED (74 aa)) are HMA-like domain. Positions 282–570 (HEVKTICILG…WIAEGFVSEE (289 aa)) constitute an NB-ARC domain. LRR repeat units follow at residues 681 to 706 (FKRL…ICEQ), 708 to 731 (SLRV…MRKL), 732 to 754 (KHLE…IGEL), 756 to 777 (HLRI…IREL), 778 to 800 (QHLH…VGKL), 802 to 823 (NLKI…IGEL), 824 to 848 (NHLQ…QISQ), 945 to 968 (MPNL…INGT), 979 to 1002 (DSRV…EFKF), and 1004 to 1027 (AGPA…VFRC).

The protein belongs to the disease resistance NB-LRR family. In terms of assembly, interacts with AVR-Pik through its N-terminal part containing the HMA-like domain.

Functionally, disease resistance (R) protein that specifically recognizes the AVR-Pik effector avirulence protein from M.oryzae. Resistance proteins guard the plant against pathogens that contain an appropriate avirulence protein via an indirect interaction with this avirulence protein. That triggers a defense system including the hypersensitive response, which restricts the pathogen growth. This chain is Disease resistance protein Piks-1, found in Oryza sativa subsp. japonica (Rice).